A 132-amino-acid chain; its full sequence is Fatty acid-binding protein (132 aa).

(5Z,8Z,11Z,14Z)-eicosatetraenoate-binding positions include Arg-107 and 127-129 (RNY). (9Z)-octadecenoate contacts are provided by residues Arg-107 and 127 to 129 (RNY).

It belongs to the calycin superfamily. Fatty-acid binding protein (FABP) family.

It is found in the cytoplasm. Its function is as follows. May play a role in the transport of fatty acids. Binds to various fatty acids but not retinoids. The chain is Fatty acid-binding protein from Schistosoma japonicum (Blood fluke).